The following is a 233-amino-acid chain: C-type lectin domain family 2 member D6 (233 aa).

Positions 1–45 (MPSSAHLQDSPPLLSRTLTQNEGQTSLRQSSSCGPSATSASESLS) are disordered. Residues 1-73 (MPSSAHLQDS…GIILPESPAK (73 aa)) are Cytoplasmic-facing. Residues 16–29 (RTLTQNEGQTSLRQ) are compositionally biased toward polar residues. Low complexity predominate over residues 30–43 (SSSCGPSATSASES). The helical; Signal-anchor for type II membrane protein transmembrane segment at 74–94 (LLCCCAVIVVLSVAVVALSVA) threads the bilayer. Topologically, residues 95-233 (LSVKKTPQIS…KLNSYTSQCQ (139 aa)) are extracellular. The 112-residue stretch at 119-230 (VGNKCYYFNE…ICSKLNSYTS (112 aa)) folds into the C-type lectin domain. N-linked (GlcNAc...) asparagine glycosylation occurs at Asn132.

Its subcellular location is the cell membrane. Its function is as follows. Lectin-type cell surface receptor. In Rattus norvegicus (Rat), this protein is C-type lectin domain family 2 member D6 (Clec2d6).